Consider the following 339-residue polypeptide: Glycerol-3-phosphate dehydrogenase [NAD(P)+] (339 aa).

NADPH is bound by residues serine 13, tryptophan 14, and lysine 108. Sn-glycerol 3-phosphate contacts are provided by lysine 108, glycine 139, and serine 141. Alanine 143 lines the NADPH pocket. Residues lysine 194, aspartate 247, serine 257, arginine 258, and asparagine 259 each coordinate sn-glycerol 3-phosphate. Lysine 194 functions as the Proton acceptor in the catalytic mechanism. Arginine 258 provides a ligand contact to NADPH. Residues valine 282 and glutamate 284 each contribute to the NADPH site.

Belongs to the NAD-dependent glycerol-3-phosphate dehydrogenase family.

The protein localises to the cytoplasm. The enzyme catalyses sn-glycerol 3-phosphate + NAD(+) = dihydroxyacetone phosphate + NADH + H(+). It carries out the reaction sn-glycerol 3-phosphate + NADP(+) = dihydroxyacetone phosphate + NADPH + H(+). It participates in membrane lipid metabolism; glycerophospholipid metabolism. In terms of biological role, catalyzes the reduction of the glycolytic intermediate dihydroxyacetone phosphate (DHAP) to sn-glycerol 3-phosphate (G3P), the key precursor for phospholipid synthesis. The protein is Glycerol-3-phosphate dehydrogenase [NAD(P)+] of Streptococcus mutans serotype c (strain ATCC 700610 / UA159).